Reading from the N-terminus, the 496-residue chain is Glutamyl-tRNA(Gln) amidotransferase subunit A (496 aa).

Active-site charge relay system residues include K75 and S150. The active-site Acyl-ester intermediate is S174.

It belongs to the amidase family. GatA subfamily. In terms of assembly, heterotrimer of A, B and C subunits.

The catalysed reaction is L-glutamyl-tRNA(Gln) + L-glutamine + ATP + H2O = L-glutaminyl-tRNA(Gln) + L-glutamate + ADP + phosphate + H(+). Allows the formation of correctly charged Gln-tRNA(Gln) through the transamidation of misacylated Glu-tRNA(Gln) in organisms which lack glutaminyl-tRNA synthetase. The reaction takes place in the presence of glutamine and ATP through an activated gamma-phospho-Glu-tRNA(Gln). The sequence is that of Glutamyl-tRNA(Gln) amidotransferase subunit A from Burkholderia pseudomallei (strain 668).